The chain runs to 145 residues: Regulator of sigma D (145 aa).

The protein belongs to the Rsd/AlgQ family. In terms of assembly, interacts with RpoD.

Its subcellular location is the cytoplasm. Binds RpoD and negatively regulates RpoD-mediated transcription activation by preventing the interaction between the primary sigma factor RpoD with the catalytic core of the RNA polymerase and with promoter DNA. May be involved in replacement of the RNA polymerase sigma subunit from RpoD to RpoS during the transition from exponential growth to the stationary phase. The chain is Regulator of sigma D from Sodalis glossinidius (strain morsitans).